We begin with the raw amino-acid sequence, 78 residues long: Cytochrome c oxidase subunit 8, mitochondrial (78 aa).

A mitochondrion-targeting transit peptide spans 1–27 (MLCQQMIRTTAKRSSNIMTRPIIMKRS). The Mitochondrial matrix portion of the chain corresponds to 28-51 (VHFKDGVYENIPFKVKGRKTPYAL). A helical transmembrane segment spans residues 52-73 (SHFGFFAIGFAVPFVACYVQLK). K74 is a topological domain (mitochondrial intermembrane). A propeptide spanning residues 75-78 (SGAF) is cleaved from the precursor.

It belongs to the cytochrome c oxidase VIIc family. In terms of assembly, component of the cytochrome c oxidase (complex IV, CIV), a multisubunit enzyme composed of 12 subunits. The complex is composed of a catalytic core of 3 subunits COX1, COX2 and COX3, encoded in the mitochondrial DNA, and 9 supernumerary subunits COX4, COX5A (or COX5B), COX6, COX7, COX8, COX9, COX12, COX13 and COX26, which are encoded in the nuclear genome. The complex exists as a monomer or a dimer and forms supercomplexes (SCs) in the inner mitochondrial membrane with a dimer of ubiquinol-cytochrome c oxidoreductase (cytochrome b-c1 complex, complex III, CIII), resulting in 2 different assemblies (supercomplexes III(2)IV and III(2)IV(2)).

Its subcellular location is the mitochondrion inner membrane. Its pathway is energy metabolism; oxidative phosphorylation. Component of the cytochrome c oxidase, the last enzyme in the mitochondrial electron transport chain which drives oxidative phosphorylation. The respiratory chain contains 3 multisubunit complexes succinate dehydrogenase (complex II, CII), ubiquinol-cytochrome c oxidoreductase (cytochrome b-c1 complex, complex III, CIII) and cytochrome c oxidase (complex IV, CIV), that cooperate to transfer electrons derived from NADH and succinate to molecular oxygen, creating an electrochemical gradient over the inner membrane that drives transmembrane transport and the ATP synthase. Cytochrome c oxidase is the component of the respiratory chain that catalyzes the reduction of oxygen to water. Electrons originating from reduced cytochrome c in the intermembrane space (IMS) are transferred via the dinuclear copper A center (CU(A)) of COX2 and heme A of COX1 to the active site in COX1, a binuclear center (BNC) formed by heme A3 and copper B (CU(B)). The BNC reduces molecular oxygen to 2 water molecules using 4 electrons from cytochrome c in the IMS and 4 protons from the mitochondrial matrix. This is Cytochrome c oxidase subunit 8, mitochondrial (COX8) from Saccharomyces cerevisiae (strain ATCC 204508 / S288c) (Baker's yeast).